A 465-amino-acid chain; its full sequence is Putrescine aminotransferase (465 aa).

Residues 150 to 151 (GT) and Gln-274 contribute to the pyridoxal 5'-phosphate site. Lys-300 is subject to N6-(pyridoxal phosphate)lysine. A pyridoxal 5'-phosphate-binding site is contributed by Thr-332.

Belongs to the class-III pyridoxal-phosphate-dependent aminotransferase family. Putrescine aminotransferase subfamily. Pyridoxal 5'-phosphate serves as cofactor.

The enzyme catalyses an alkane-alpha,omega-diamine + 2-oxoglutarate = an omega-aminoaldehyde + L-glutamate. It catalyses the reaction putrescine + 2-oxoglutarate = 1-pyrroline + L-glutamate + H2O. It carries out the reaction cadaverine + 2-oxoglutarate = 5-aminopentanal + L-glutamate. It functions in the pathway amine and polyamine degradation; putrescine degradation; 4-aminobutanal from putrescine (transaminase route): step 1/1. Functionally, catalyzes the aminotransferase reaction from putrescine to 2-oxoglutarate, leading to glutamate and 4-aminobutanal, which spontaneously cyclizes to form 1-pyrroline. This is the first step in one of two pathways for putrescine degradation, where putrescine is converted into 4-aminobutanoate (gamma-aminobutyrate or GABA) via 4-aminobutanal. Also functions as a cadaverine transaminase in a a L-lysine degradation pathway to succinate that proceeds via cadaverine, glutarate and L-2-hydroxyglutarate. The polypeptide is Putrescine aminotransferase (Cronobacter sakazakii (strain ATCC BAA-894) (Enterobacter sakazakii)).